The primary structure comprises 155 residues: Small ribosomal subunit protein bS16 (155 aa).

Residues 100 to 155 form a disordered region; it reads EAGIPDPAPSTEEPAAVCEASAEMAGQPGEVEPAGAAAEPNSQEPEPEEEKPQVEA. Residues 124–143 are compositionally biased toward low complexity; it reads AGQPGEVEPAGAAAEPNSQE.

Belongs to the bacterial ribosomal protein bS16 family.

The protein is Small ribosomal subunit protein bS16 of Synechococcus sp. (strain JA-3-3Ab) (Cyanobacteria bacterium Yellowstone A-Prime).